We begin with the raw amino-acid sequence, 516 residues long: D-aminopeptidase (516 aa).

The active-site Nucleophile is serine 61. Lysine 64 (proton donor/acceptor) is an active-site residue. Residues 476–486 (RRSMDAPAPGD) form an important for specificity region. A substrate-binding site is contributed by aspartate 480.

It belongs to the peptidase S12 family. As to quaternary structure, homodimer.

It catalyses the reaction Release of an N-terminal D-amino acid from a peptide, Xaa-|-Yaa-, in which Xaa is preferably D-Ala, D-Ser or D-Thr. D-amino acid amides and methyl esters also are hydrolyzed, as is glycine amide.. With respect to regulation, inhibited by beta-lactam compounds such as 6-aminopenicillic acid, 7-aminocephalosporanic acid, benzylpenicillin and ampicillin. Inhibited by p-chloromercuribenzoate. In terms of biological role, hydrolyzes N-terminal residues in D-amino acid-containing peptides. This chain is D-aminopeptidase, found in Cereibacter sphaeroides (strain ATCC 17029 / ATH 2.4.9) (Rhodobacter sphaeroides).